A 236-amino-acid polypeptide reads, in one-letter code: Hydantoin racemase (236 aa).

In terms of assembly, homohexamer, homoheptamer or homooctamer.

The enzyme catalyses a D-5-monosubstituted hydantoin = a L-5-monosubstituted hydantoin. It catalyses the reaction D-5-benzylhydantoin = L-5-benzylhydantoin. With respect to regulation, completely inhibited by HgCl(2) and iodoacetamide. Stimulated by dithiothreitol. In terms of biological role, involved in the asymmetric conversion of racemic 5-substituted hydantoins to the corresponding L-amino acids. Catalyzes the racemization via enolization of D- and L-5-monosubstituted hydantoins. It shows preference for hydantoins with arylalkyl side chains such as 5-benzylhydantoin (BH) and, to a lesser extent, 5-(3-indolylmethylene)hydantoin (IMH). The sequence is that of Hydantoin racemase from Paenarthrobacter aurescens (Arthrobacter aurescens).